A 190-amino-acid polypeptide reads, in one-letter code: Crossover junction endodeoxyribonuclease RuvC (190 aa).

Active-site residues include D8, E67, and D139. Mg(2+) contacts are provided by D8, E67, and D139.

This sequence belongs to the RuvC family. In terms of assembly, homodimer which binds Holliday junction (HJ) DNA. The HJ becomes 2-fold symmetrical on binding to RuvC with unstacked arms; it has a different conformation from HJ DNA in complex with RuvA. In the full resolvosome a probable DNA-RuvA(4)-RuvB(12)-RuvC(2) complex forms which resolves the HJ. Mg(2+) is required as a cofactor.

The protein resides in the cytoplasm. The enzyme catalyses Endonucleolytic cleavage at a junction such as a reciprocal single-stranded crossover between two homologous DNA duplexes (Holliday junction).. Its function is as follows. The RuvA-RuvB-RuvC complex processes Holliday junction (HJ) DNA during genetic recombination and DNA repair. Endonuclease that resolves HJ intermediates. Cleaves cruciform DNA by making single-stranded nicks across the HJ at symmetrical positions within the homologous arms, yielding a 5'-phosphate and a 3'-hydroxyl group; requires a central core of homology in the junction. The consensus cleavage sequence is 5'-(A/T)TT(C/G)-3'. Cleavage occurs on the 3'-side of the TT dinucleotide at the point of strand exchange. HJ branch migration catalyzed by RuvA-RuvB allows RuvC to scan DNA until it finds its consensus sequence, where it cleaves and resolves the cruciform DNA. This chain is Crossover junction endodeoxyribonuclease RuvC, found in Haemophilus influenzae (strain 86-028NP).